The sequence spans 1521 residues: Protein dispatched homolog 1 (1521 aa).

A compositionally biased stretch (polar residues) spans 1–10 (MAVISGSDSV). The tract at residues 1 to 55 (MAVISGSDSVLLSNGSISTSTSNPSPLSPSDGDLPAQHLGPRETPRTKASPNGCL) is disordered. Residues 11 to 35 (LLSNGSISTSTSNPSPLSPSDGDLP) are compositionally biased toward low complexity. N-linked (GlcNAc...) asparagine glycans are attached at residues Asn14 and Asn58. Residues 189 to 209 (VVVLGMCTLLIVVCALVGVLV) form a helical membrane-spanning segment. Asn390 carries N-linked (GlcNAc...) asparagine glycosylation. One can recognise an SSD domain in the interval 485–657 (GIEFGIKHSL…VTWLPAVIVL (173 aa)). 3 helical membrane passes run 499–519 (LLMDTVYPAIAIAIVLLIMCV), 524–544 (MFITLMTMFAIISSLIVSYFL), and 548–568 (VFNFEFFPFMNLTALIILVGI). An N-linked (GlcNAc...) asparagine glycan is attached at Asn581. 8 helical membrane passes run 603–623 (AALSMFVTSFTTAAAFYANYV), 637–657 (GTAILVNYVLMVTWLPAVIVL), 717–737 (YLWLIWFLALTVGGAYIVCVN), 986–1006 (MGLSVAVAFSVMLLTTWNIII), 1008–1028 (LYAIVSIAGTIFVTVGSLVLL), 1038–1058 (VTISVAVGLSVDFAVHYGVAY), 1081–1101 (IAMAALTTFVAGAMMMPSTVL), and 1109–1129 (FMMLVMCVSWAFATFFFQCLC). 2 stretches are compositionally biased toward polar residues: residues 1355–1364 (QENLGRTSTH) and 1418–1428 (TKSKVSGLPNQ). Positions 1355-1440 (QENLGRTSTH…KEEKQVEPSL (86 aa)) are disordered. N-linked (GlcNAc...) asparagine glycosylation occurs at Asn1455.

This sequence belongs to the dispatched family. In terms of assembly, interacts with SHH; via the cholesterol anchor of the dually lipid-modified SHH (ShhNp).

The protein localises to the membrane. Its function is as follows. Functions in hedgehog (Hh) signaling. Regulates the release and extracellular accumulation of cholesterol-modified hedgehog proteins and is hence required for effective production of the Hh signal. Synergizes with SCUBE2 to cause an increase in SHH secretion. The protein is Protein dispatched homolog 1 (Disp1) of Mus musculus (Mouse).